The primary structure comprises 254 residues: Dihydroorotate dehydrogenase B (NAD(+)), electron transfer subunit (254 aa).

In terms of domain architecture, FAD-binding FR-type spans 1–99 (MLQTEMKVIQ…LGPLGKGFDI (99 aa)). FAD contacts are provided by residues 50-53 (RPIS), 67-69 (LYR), and 74-75 (GT). Residues Cys218, Cys223, Cys226, and Cys241 each coordinate [2Fe-2S] cluster.

Belongs to the PyrK family. In terms of assembly, heterotetramer of 2 PyrK and 2 PyrD type B subunits. The cofactor is [2Fe-2S] cluster. FAD is required as a cofactor.

Its pathway is pyrimidine metabolism; UMP biosynthesis via de novo pathway; orotate from (S)-dihydroorotate (NAD(+) route): step 1/1. Responsible for channeling the electrons from the oxidation of dihydroorotate from the FMN redox center in the PyrD type B subunit to the ultimate electron acceptor NAD(+). This chain is Dihydroorotate dehydrogenase B (NAD(+)), electron transfer subunit, found in Listeria monocytogenes serovar 1/2a (strain ATCC BAA-679 / EGD-e).